The following is a 514-amino-acid chain: Maltose/maltodextrin transport system permease protein MalF (514 aa).

At 1–16 (MDVIKKKHWWQSDALK) the chain is on the cytoplasmic side. Residues 17 to 36 (WSVLGLLGLLVGYLVVLMYA) traverse the membrane as a helical segment. Over 37-39 (QGE) the chain is Periplasmic. A helical membrane pass occupies residues 40 to 58 (YLFAITTLILSSAGLYIFA). The Cytoplasmic segment spans residues 59–66 (NRKAYAWR). A helical membrane pass occupies residues 67-92 (YVYPGMAGMGLFVLFPLVCTIAIAFT). Topologically, residues 93-275 (NYSSTNQLTF…RVFTDEGIQK (183 aa)) are periplasmic. A helical membrane pass occupies residues 276-306 (PFLAIFVWTVVFSLITVFLTVAVGMVLACLV). The ABC transmembrane type-1 domain maps to 281–505 (FVWTVVFSLI…LLVGALAIVN (225 aa)). The Cytoplasmic segment spans residues 307 to 318 (QWEALRGKAVYR). A helical transmembrane segment spans residues 319-336 (VLLILPYAVPSFISILIF). The Periplasmic portion of the chain corresponds to 337 to 369 (KGLFNQSFGEINMMLSALFGVKPAWFSDPTTAR). A helical transmembrane segment spans residues 370–392 (TMLIIVNTWLGYPYMMILCMGLL). Topologically, residues 393–425 (KAIPDDLYEASAMDGAGPFQNFFKITLPLLIKP) are cytoplasmic. A helical membrane pass occupies residues 426-452 (LTPLMIASFAFNFNNFVLIQLLTNGGP). Residues 453–483 (DRLGTTTPAGYTDLLVNYTYRIAFEGGGGQD) lie on the Periplasmic side of the membrane. A helical transmembrane segment spans residues 484–505 (FGLAAAIATLIFLLVGALAIVN). The Cytoplasmic segment spans residues 506–514 (LKATRMKFD).

This sequence belongs to the binding-protein-dependent transport system permease family. MalFG subfamily. The complex is composed of two ATP-binding proteins (MalK), two transmembrane proteins (MalG and MalF) and a solute-binding protein (MalE). Protein stability and stable complex formation require YidC.

Its subcellular location is the cell inner membrane. Part of the ABC transporter complex MalEFGK involved in maltose/maltodextrin import. Probably responsible for the translocation of the substrate across the membrane. This chain is Maltose/maltodextrin transport system permease protein MalF, found in Escherichia coli (strain K12).